The chain runs to 350 residues: Biotin synthase (350 aa).

Residues asparagine 41 to arginine 268 form the Radical SAM core domain. The [4Fe-4S] cluster site is built by cysteine 56, cysteine 60, and cysteine 63. Cysteine 100, cysteine 131, cysteine 191, and arginine 263 together coordinate [2Fe-2S] cluster.

The protein belongs to the radical SAM superfamily. Biotin synthase family. As to quaternary structure, homodimer. [4Fe-4S] cluster serves as cofactor. Requires [2Fe-2S] cluster as cofactor.

It carries out the reaction (4R,5S)-dethiobiotin + (sulfur carrier)-SH + 2 reduced [2Fe-2S]-[ferredoxin] + 2 S-adenosyl-L-methionine = (sulfur carrier)-H + biotin + 2 5'-deoxyadenosine + 2 L-methionine + 2 oxidized [2Fe-2S]-[ferredoxin]. Its pathway is cofactor biosynthesis; biotin biosynthesis; biotin from 7,8-diaminononanoate: step 2/2. Catalyzes the conversion of dethiobiotin (DTB) to biotin by the insertion of a sulfur atom into dethiobiotin via a radical-based mechanism. This chain is Biotin synthase, found in Shewanella piezotolerans (strain WP3 / JCM 13877).